We begin with the raw amino-acid sequence, 302 residues long: Eukaryotic translation initiation factor 3 subunit F (302 aa).

In terms of domain architecture, MPN spans 23-165; that stretch reads IVIEPAVLFS…IKTYVSSPVG (143 aa). Position 162 is a phosphoserine (Ser-162).

The protein belongs to the eIF-3 subunit F family. Component of the eukaryotic translation initiation factor 3 (eIF-3) complex. The eIF-3 complex appears to include tif32/eif3a, SPAC25G10.08/eif3b, tif33/eif3c, SPBC4C3.07/eif3f, tif35/eif3g and sum1/eif3i. This set of common subunits may also associate exclusively with either moe1/eif3d and int6/eif3e, or with SPAC821.05/eif3h and SPAC1751.03/eif3m. The eIF-3 complex may also include SPAC3A12.13c/eif3j.

It localises to the cytoplasm. In terms of biological role, component of the eukaryotic translation initiation factor 3 (eIF-3) complex, which is involved in protein synthesis of a specialized repertoire of mRNAs and, together with other initiation factors, stimulates binding of mRNA and methionyl-tRNAi to the 40S ribosome. The eIF-3 complex specifically targets and initiates translation of a subset of mRNAs involved in cell proliferation. The polypeptide is Eukaryotic translation initiation factor 3 subunit F (Schizosaccharomyces pombe (strain 972 / ATCC 24843) (Fission yeast)).